Reading from the N-terminus, the 355-residue chain is Cytoplasmic tRNA 2-thiolation protein 1 (355 aa).

A disordered region spans residues 320 to 341; the sequence is GIGRPRGVNGDHNKETKKPGSV. Residues 328-337 show a composition bias toward basic and acidic residues; sequence NGDHNKETKK.

The protein belongs to the TtcA family. CTU1/NCS6/ATPBD3 subfamily.

The protein resides in the cytoplasm. The protein operates within tRNA modification; 5-methoxycarbonylmethyl-2-thiouridine-tRNA biosynthesis. Its function is as follows. Plays a central role in 2-thiolation of mcm(5)S(2)U at tRNA wobble positions of tRNA(Lys), tRNA(Glu) and tRNA(Gln). Directly binds tRNAs and probably acts by catalyzing adenylation of tRNAs, an intermediate required for 2-thiolation. It is unclear whether it acts as a sulfurtransferase that transfers sulfur from thiocarboxylated URM1 onto the uridine of tRNAs at wobble position. This chain is Cytoplasmic tRNA 2-thiolation protein 1, found in Arabidopsis thaliana (Mouse-ear cress).